A 292-amino-acid chain; its full sequence is Cyclin-dependent kinase 5 (292 aa).

The Protein kinase domain maps to 4–286 (YEKLEKIGEG…AEEALQHPYF (283 aa)). Residues 10-18 (IGEGTYGTV) and Lys33 contribute to the ATP site. Phosphotyrosine; by ABL1, EPHA4 and FYN is present on Tyr15. Thr17 is subject to Phosphothreonine. Residue Lys56 is modified to N6-acetyllysine. Ser72 bears the Phosphoserine mark. Asp126 serves as the catalytic Proton acceptor. The residue at position 159 (Ser159) is a Phosphoserine.

Belongs to the protein kinase superfamily. CMGC Ser/Thr protein kinase family. CDC2/CDKX subfamily. As to quaternary structure, heterodimer composed of a catalytic subunit CDK5 and a regulatory subunit CDK5R1 (p25) and macromolecular complex composed of at least CDK5, CDK5R1 (p35) and CDK5RAP1 or CDK5RAP2 or CDK5RAP3. Only the heterodimer shows kinase activity. Under neurotoxic stress and neuronal injury conditions, p35 is cleaved by calpain to generate p25 that hyperactivates CDK5, that becomes functionally disabled and often toxic. Found in a trimolecular complex with CABLES1 and ABL1. Interacts with CABLES1 and CABLES2. Interacts with AATK and GSTP1. Binds to HDAC1 when in complex with p25. Interaction with myristoylation p35 promotes CDK5 association with membranes. Both isoforms 1 and 2 interacts with beta-catenin/CTNNB1. Interacts with delta-catenin/CTNND2 and APEX1. Interacts with P53/TP53 in neurons. Interacts with EPHA4; may mediate the activation of NGEF by EPHA4. Interacts with PTK2/FAK1. The complex p35/CDK5 interacts with CLOCK. Post-translationally, phosphorylation on Tyr-15 by ABL1 and FYN, and on Ser-159 by casein kinase 1 promotes kinase activity. By contrast, phosphorylation at Thr-14 inhibits activity. Phosphorylation at Ser-159 is essential for maximal catalytic activity.

It localises to the nucleus. The protein resides in the cytoplasm. The protein localises to the cell membrane. Its subcellular location is the perikaryon. It is found in the cell projection. It localises to the lamellipodium. The protein resides in the growth cone. The protein localises to the postsynaptic density. Its subcellular location is the synapse. The catalysed reaction is L-seryl-[protein] + ATP = O-phospho-L-seryl-[protein] + ADP + H(+). The enzyme catalyses L-threonyl-[protein] + ATP = O-phospho-L-threonyl-[protein] + ADP + H(+). Inhibited by 2-(1-ethyl-2-hydroxyethylamino)-6-benzylamino-9-isopropylpurine (roscovitine), 1-isopropyl-4-aminobenzyl-6-ether-linked benzimidazoles, resveratrol, AT-7519 and olomoucine. Activated by CDK5R1 (p35) and CDK5R2 (p39) during the development of the nervous system; degradation of CDK5R1 (p35) and CDK5R2 (p39) by proteasome result in down regulation of kinase activity, during this process, CDK5 phosphorylates p35 and induces its ubiquitination and subsequent degradation. Kinase activity is mainly determined by the amount of p35 available and subcellular location; reversible association to plasma membrane inhibits activity. Long-term inactivation as well as CDK5R1 (p25)-mediated hyperactivation of CDK5 triggers cell death. The pro-death activity of hyperactivated CDK5 is suppressed by membrane association of CDK5, via myristoylation of p35. Brain-derived neurotrophic factor, glial-derived neurotrophic factor, nerve growth factor (NGF), retinoic acid, laminin and neuregulin promote activity. Neurotoxicity enhances nuclear activity, thus leading to MEF2 phosphorylation and inhibition prior to apoptosis of cortical neurons. Repression by GSTP1 via p25/p35 translocation prevents neurodegeneration. In terms of biological role, proline-directed serine/threonine-protein kinase essential for neuronal cell cycle arrest and differentiation and may be involved in apoptotic cell death in neuronal diseases by triggering abortive cell cycle re-entry. Interacts with D1 and D3-type G1 cyclins. Phosphorylates SRC, NOS3, VIM/vimentin, p35/CDK5R1, MEF2A, SIPA1L1, SH3GLB1, PXN, PAK1, MCAM/MUC18, SEPT5, SYN1, DNM1, AMPH, SYNJ1, CDK16, RAC1, RHOA, CDC42, TONEBP/NFAT5, MAPT/TAU, MAP1B, histone H1, p53/TP53, HDAC1, APEX1, PTK2/FAK1, huntingtin/HTT, ATM, MAP2, NEFH and NEFM. Regulates several neuronal development and physiological processes including neuronal survival, migration and differentiation, axonal and neurite growth, synaptogenesis, oligodendrocyte differentiation, synaptic plasticity and neurotransmission, by phosphorylating key proteins. Negatively regulates the CACNA1B/CAV2.2 -mediated Ca(2+) release probability at hippocampal neuronal soma and synaptic terminals. Activated by interaction with CDK5R1 (p35) and CDK5R2 (p39), especially in postmitotic neurons, and promotes CDK5R1 (p35) expression in an autostimulation loop. Phosphorylates many downstream substrates such as Rho and Ras family small GTPases (e.g. PAK1, RAC1, RHOA, CDC42) or microtubule-binding proteins (e.g. MAPT/TAU, MAP2, MAP1B), and modulates actin dynamics to regulate neurite growth and/or spine morphogenesis. Also phosphorylates exocytosis associated proteins such as MCAM/MUC18, SEPT5, SYN1, and CDK16/PCTAIRE1 as well as endocytosis associated proteins such as DNM1, AMPH and SYNJ1 at synaptic terminals. In the mature central nervous system (CNS), regulates neurotransmitter movements by phosphorylating substrates associated with neurotransmitter release and synapse plasticity; synaptic vesicle exocytosis, vesicles fusion with the presynaptic membrane, and endocytosis. Promotes cell survival by activating anti-apoptotic proteins BCL2 and STAT3, and negatively regulating of JNK3/MAPK10 activity. Phosphorylation of p53/TP53 in response to genotoxic and oxidative stresses enhances its stabilization by preventing ubiquitin ligase-mediated proteasomal degradation, and induces transactivation of p53/TP53 target genes, thus regulating apoptosis. Phosphorylation of p35/CDK5R1 enhances its stabilization by preventing calpain-mediated proteolysis producing p25/CDK5R1 and avoiding ubiquitin ligase-mediated proteasomal degradation. During aberrant cell-cycle activity and DNA damage, p25/CDK5 activity elicits cell-cycle activity and double-strand DNA breaks that precedes neuronal death by deregulating HDAC1. DNA damage triggered phosphorylation of huntingtin/HTT in nuclei of neurons protects neurons against polyglutamine expansion as well as DNA damage mediated toxicity. Phosphorylation of PXN reduces its interaction with PTK2/FAK1 in matrix-cell focal adhesions (MCFA) during oligodendrocytes (OLs) differentiation. Negative regulator of Wnt/beta-catenin signaling pathway. Activator of the GAIT (IFN-gamma-activated inhibitor of translation) pathway, which suppresses expression of a post-transcriptional regulon of proinflammatory genes in myeloid cells; phosphorylates the linker domain of glutamyl-prolyl tRNA synthetase (EPRS) in a IFN-gamma-dependent manner, the initial event in assembly of the GAIT complex. Phosphorylation of SH3GLB1 is required for autophagy induction in starved neurons. Phosphorylation of TONEBP/NFAT5 in response to osmotic stress mediates its rapid nuclear localization. MEF2 is inactivated by phosphorylation in nucleus in response to neurotoxin, thus leading to neuronal apoptosis. APEX1 AP-endodeoxyribonuclease is repressed by phosphorylation, resulting in accumulation of DNA damage and contributing to neuronal death. NOS3 phosphorylation down regulates NOS3-derived nitrite (NO) levels. SRC phosphorylation mediates its ubiquitin-dependent degradation and thus leads to cytoskeletal reorganization. May regulate endothelial cell migration and angiogenesis via the modulation of lamellipodia formation. Involved in dendritic spine morphogenesis by mediating the EFNA1-EPHA4 signaling. The complex p35/CDK5 participates in the regulation of the circadian clock by modulating the function of CLOCK protein: phosphorylates CLOCK at 'Thr-451' and 'Thr-461' and regulates the transcriptional activity of the CLOCK-BMAL1 heterodimer in association with altered stability and subcellular distribution. This Bos taurus (Bovine) protein is Cyclin-dependent kinase 5.